The primary structure comprises 240 residues: uncharacterized protein (240 aa).

The N-terminal stretch at 1–17 (MRMAFMLLALLFSFRNA) is a signal peptide.

This is an uncharacterized protein from Treponema pallidum (strain Nichols).